Here is a 259-residue protein sequence, read N- to C-terminus: Flap endonuclease Xni (259 aa).

D109 is a Mg(2+) binding site. The region spanning 165–255 is the 5'-3' exonuclease domain; it reads LKPEQLADYW…FNLQDIRYEK (91 aa). Residues L176, A177, I187, and V190 each coordinate K(+). The segment at 189–194 is interaction with DNA; that stretch reads GVGPKA.

It belongs to the Xni family. Mg(2+) serves as cofactor. The cofactor is K(+).

Its function is as follows. Has flap endonuclease activity. During DNA replication, flap endonucleases cleave the 5'-overhanging flap structure that is generated by displacement synthesis when DNA polymerase encounters the 5'-end of a downstream Okazaki fragment. The polypeptide is Flap endonuclease Xni (Aliivibrio fischeri (strain ATCC 700601 / ES114) (Vibrio fischeri)).